We begin with the raw amino-acid sequence, 94 residues long: Mitochondrial import inner membrane translocase subunit Tim8 A (94 aa).

Residues 47–70 (CWDKCIDRPGNKLDSRTESCLVSC) carry the Twin CX3C motif motif. 2 cysteine pairs are disulfide-bonded: cysteine 47/cysteine 70 and cysteine 51/cysteine 66.

It belongs to the small Tim family. In terms of assembly, heterohexamer; composed of 3 copies of TIMM8A and 3 copies of TIMM13, named soluble 70 kDa complex. Associates with the TIM22 complex, whose core is composed of TIMM22.

It localises to the mitochondrion inner membrane. Mitochondrial intermembrane chaperone that participates in the import and insertion of some multi-pass transmembrane proteins into the mitochondrial inner membrane. Also required for the transfer of beta-barrel precursors from the TOM complex to the sorting and assembly machinery (SAM complex) of the outer membrane. Acts as a chaperone-like protein that protects the hydrophobic precursors from aggregation and guide them through the mitochondrial intermembrane space. The TIMM8-TIMM13 complex mediates the import of some proteins while the predominant TIMM9-TIMM10 70 kDa complex mediates the import of much more proteins. This Xenopus laevis (African clawed frog) protein is Mitochondrial import inner membrane translocase subunit Tim8 A (timm8a).